The primary structure comprises 984 residues: Pro-apoptotic serine protease NMA111 (984 aa).

A serine protease region spans residues 51-241 (VVSIQFAQVA…LPLNRGKRAL (191 aa)). Catalysis depends on charge relay system residues histidine 89, aspartate 120, and serine 203. PDZ domains lie at 268-346 (RRLG…ERNG) and 756-826 (PEWI…VRNK).

It belongs to the peptidase S1C family.

It is found in the nucleus. Functionally, nuclear serine protease which mediates apoptosis. This Yarrowia lipolytica (strain CLIB 122 / E 150) (Yeast) protein is Pro-apoptotic serine protease NMA111 (NMA111).